Here is a 313-residue protein sequence, read N- to C-terminus: Vacuolar membrane protein ZYRO0A01628g (313 aa).

Residues 22-37 (SASKTSSHTSKTSYSA) are compositionally biased toward low complexity. Residues 22–48 (SASKTSSHTSKTSYSAVVTPPSSDGNP) are disordered. Residues 59–79 (GLIYIIVGGTAAAIFAFIILW) traverse the membrane as a helical segment. Low complexity predominate over residues 221-234 (TSLPSASESSSNLL). The tract at residues 221-313 (TSLPSASESS…LLEGNDDGTT (93 aa)) is disordered. Basic and acidic residues predominate over residues 235–247 (DRPERTASPERKP). The segment covering 248 to 257 (KAYGRYHQRN) has biased composition (basic residues). The span at 285–301 (NVNNNNKKHGTTPSRFL) shows a compositional bias: polar residues.

This sequence belongs to the PRM5 family.

The protein localises to the vacuole membrane. In Zygosaccharomyces rouxii (strain ATCC 2623 / CBS 732 / NBRC 1130 / NCYC 568 / NRRL Y-229), this protein is Vacuolar membrane protein ZYRO0A01628g.